The chain runs to 543 residues: Zinc finger protein egl-43 (543 aa).

The tract at residues Ser-2–Glu-62 is positive regulatory (PR) domain. 2 C2H2-type zinc fingers span residues His-159–His-181 and Phe-187–His-209. The C2H2-type 3; atypical zinc-finger motif lies at Trp-213–Pro-233. A disordered region spans residues Pro-299 to His-380. The span at Gly-306–Glu-317 shows a compositional bias: polar residues. Positions Thr-335 to Ile-348 are enriched in basic and acidic residues. 2 C2H2-type zinc fingers span residues Tyr-444–His-466 and Tyr-472–His-495. Residues Asn-496 to Val-543 are disordered. The span at Leu-513–Leu-533 shows a compositional bias: low complexity.

It is found in the nucleus. Functionally, probable transcription factor, required for migration of the hermaphrodite-specific motor neurons (HSNs) from the tail to the gonad primordium during HSN cell differentiation. Required for phasmid neuron development. Required to specify the pi-cell fate of ventral uterine precursor cell (VU) cells. Probable transcription factor, involved in lin-12 (Notch)-dependent anchor cell (AC) and ventral uterine (VU) precursor cell fate specification and in AC invasion. Prevents AC proliferation after AC cell specification by repressing lin-12 expression. May form a positive feedback loop, together with the transcription factor fos-1, that maintains mutual high levels of expression and so activates AC invasion. In terms of biological role, dispensable for anchor cell (AC) invasion and for preventing AC proliferation. The sequence is that of Zinc finger protein egl-43 from Caenorhabditis elegans.